Here is a 591-residue protein sequence, read N- to C-terminus: BRCA1-associated protein (591 aa).

A Phosphoserine modification is found at serine 52. Residues 82–93 are compositionally biased toward basic and acidic residues; the sequence is DEVRDTVEEKKP. Residues 82–124 form a disordered region; that stretch reads DEVRDTVEEKKPSAAPVSAQRSREQSESVNTAPESPSKQLPDQ. A compositionally biased stretch (polar residues) spans 108-124; the sequence is ESVNTAPESPSKQLPDQ. 2 positions are modified to phosphoserine: serine 116 and serine 118. The RING-type zinc finger occupies 263-303; sequence CTVCLERMDESVNGILTTLCNHSFHSQCLQRWDDTTCPVCR. The UBP-type; degenerate zinc finger occupies 300–392; the sequence is PVCRYCQTPE…GKIVQYECEG (93 aa). 8 residues coordinate Zn(2+): cysteine 316, cysteine 319, cysteine 328, cysteine 331, cysteine 336, histidine 343, histidine 347, and histidine 353. Positions 430 to 536 form a coiled coil; it reads EKDTAEEINN…EIQEQLRDVM (107 aa). Positions 563 to 591 are disordered; it reads IAMASAPNPPSSGAGGKLQSRKGRSKRGK. Residues 581-591 show a composition bias toward basic residues; sequence QSRKGRSKRGK.

As to quaternary structure, interacts with the nuclear localization signal of BRCA1 and with the N-terminal of KSR1. The C-terminal portion of BRCA1 interacts with DDB1. In terms of tissue distribution, isoform 2 is highly expressed in testis, lower levels in brain, heart, lung, stomach, colon, uterus, liver and kidney. Isoform 1 is only expressed in the testis. Isoform 2 is predominant over isoform 1 in both fetal and adult testis.

It localises to the cytoplasm. The enzyme catalyses S-ubiquitinyl-[E2 ubiquitin-conjugating enzyme]-L-cysteine + [acceptor protein]-L-lysine = [E2 ubiquitin-conjugating enzyme]-L-cysteine + N(6)-ubiquitinyl-[acceptor protein]-L-lysine.. It participates in protein modification; protein ubiquitination. Negatively regulates MAP kinase activation by limiting the formation of Raf/MEK complexes probably by inactivation of the KSR1 scaffold protein. Also acts as a Ras responsive E3 ubiquitin ligase that, on activation of Ras, is modified by auto-polyubiquitination resulting in the release of inhibition of Raf/MEK complex formation. May also act as a cytoplasmic retention protein with a role in regulating nuclear transport. This chain is BRCA1-associated protein, found in Mus musculus (Mouse).